The sequence spans 151 residues: NADH-quinone oxidoreductase subunit I 2 (151 aa).

2 4Fe-4S ferredoxin-type domains span residues Pro-49–Glu-82 and Val-93–Asp-122. 8 residues coordinate [4Fe-4S] cluster: Cys-62, Cys-65, Cys-68, Cys-72, Cys-102, Cys-105, Cys-108, and Cys-112.

The protein belongs to the complex I 23 kDa subunit family. NDH-1 is composed of 14 different subunits. Subunits NuoA, H, J, K, L, M, N constitute the membrane sector of the complex. [4Fe-4S] cluster serves as cofactor.

The protein resides in the cell inner membrane. The enzyme catalyses a quinone + NADH + 5 H(+)(in) = a quinol + NAD(+) + 4 H(+)(out). Functionally, NDH-1 shuttles electrons from NADH, via FMN and iron-sulfur (Fe-S) centers, to quinones in the respiratory chain. The immediate electron acceptor for the enzyme in this species is believed to be ubiquinone. Couples the redox reaction to proton translocation (for every two electrons transferred, four hydrogen ions are translocated across the cytoplasmic membrane), and thus conserves the redox energy in a proton gradient. In Solibacter usitatus (strain Ellin6076), this protein is NADH-quinone oxidoreductase subunit I 2.